The primary structure comprises 356 residues: tRNA N6-adenosine threonylcarbamoyltransferase (356 aa).

Fe cation contacts are provided by His-114 and His-118. Residues 136-140, Asp-169, Gly-182, and Asn-280 each bind substrate; that span reads LVSGG. Asp-308 is a binding site for Fe cation. The interval 333 to 356 is disordered; the sequence is ARPRWPLDNSQPALLGSGKKGAKA.

This sequence belongs to the KAE1 / TsaD family. Fe(2+) is required as a cofactor.

Its subcellular location is the cytoplasm. The enzyme catalyses L-threonylcarbamoyladenylate + adenosine(37) in tRNA = N(6)-L-threonylcarbamoyladenosine(37) in tRNA + AMP + H(+). Required for the formation of a threonylcarbamoyl group on adenosine at position 37 (t(6)A37) in tRNAs that read codons beginning with adenine. Is involved in the transfer of the threonylcarbamoyl moiety of threonylcarbamoyl-AMP (TC-AMP) to the N6 group of A37, together with TsaE and TsaB. TsaD likely plays a direct catalytic role in this reaction. This is tRNA N6-adenosine threonylcarbamoyltransferase from Dinoroseobacter shibae (strain DSM 16493 / NCIMB 14021 / DFL 12).